A 540-amino-acid polypeptide reads, in one-letter code: Probable G-protein coupled receptor 75 (540 aa).

The Extracellular segment spans residues 1–46 (MNTSAPLQNVPNATLLNMPPLHGGNSTSLQEGLRDFIHTATLVTCT). 2 N-linked (GlcNAc...) asparagine glycosylation sites follow: Asn2 and Asn25. The helical transmembrane segment at 47–67 (FLLAIIFCLGSYGNFIVFLSF) threads the bilayer. Topologically, residues 68–86 (FDPSFRKFRTNFDFMILNL) are cytoplasmic. A helical transmembrane segment spans residues 87–107 (SFCDLFICGVTAPMFTFVLFF). At 108–120 (SSASSIPDSFCFT) the chain is on the extracellular side. The chain crosses the membrane as a helical span at residues 121-141 (FHLTSSGFVIMSLKMVAVIAL). At 142–160 (HRLRMVMGKQPNCTASFSC) the chain is on the cytoplasmic side. Residues 161–181 (ILLLTLLLWATSFTLATLATL) traverse the membrane as a helical segment. Topologically, residues 182 to 205 (RTNKSHLCLPMSSLMDGEGKAILS) are extracellular. An N-linked (GlcNAc...) asparagine glycan is attached at Asn184. Residues 206 to 226 (LYVVDFTFCVAVVSVSYIMIA) form a helical membrane-spanning segment. Topologically, residues 227 to 318 (QTLRKNAQVK…INFSTAKDSK (92 aa)) are cytoplasmic. The chain crosses the membrane as a helical span at residues 319 to 339 (AVVTCVVIVLSVLVCCLPLGI). Topologically, residues 340-350 (SLVQMVLSDNG) are extracellular. Residues 351–371 (SFILYQFELFGFTLIFFKSGL) traverse the membrane as a helical segment. Over 372-540 (NPFIYSRNSA…SAKQIPIPSV (169 aa)) the chain is Cytoplasmic. The segment at 443–475 (DQACGPSHSKESAASPKVSAGHQPCGQSSSTPI) is disordered.

The protein belongs to the G-protein coupled receptor 1 family. As to expression, highly expressed in brain and heart. Also detected in skeletal muscle, liver and kidney. Also expressed by islet cells (at protein level).

It is found in the cell membrane. Its function is as follows. G protein-coupled receptor that is activated by the chemokine CCL5/RANTES. Probably coupled to heterotrimeric Gq proteins, it stimulates inositol trisphosphate production and calcium mobilization upon activation. Together with CCL5/RANTES, may play a role in neuron survival through activation of a downstream signaling pathway involving the PI3, Akt and MAP kinases. CCL5/RANTES may also regulate insulin secretion by pancreatic islet cells through activation of this receptor. In Mus musculus (Mouse), this protein is Probable G-protein coupled receptor 75 (Gpr75).